A 124-amino-acid polypeptide reads, in one-letter code: Small ribosomal subunit protein uS12 (124 aa).

Aspartate 89 carries the post-translational modification 3-methylthioaspartic acid. The interval 105–124 is disordered; that stretch reads SGVSDRRQGRSKYGAKRPKS. Over residues 113–124 the composition is skewed to basic residues; the sequence is GRSKYGAKRPKS.

The protein belongs to the universal ribosomal protein uS12 family. In terms of assembly, part of the 30S ribosomal subunit. Contacts proteins S8 and S17. May interact with IF1 in the 30S initiation complex.

In terms of biological role, with S4 and S5 plays an important role in translational accuracy. Its function is as follows. Interacts with and stabilizes bases of the 16S rRNA that are involved in tRNA selection in the A site and with the mRNA backbone. Located at the interface of the 30S and 50S subunits, it traverses the body of the 30S subunit contacting proteins on the other side and probably holding the rRNA structure together. The combined cluster of proteins S8, S12 and S17 appears to hold together the shoulder and platform of the 30S subunit. The sequence is that of Small ribosomal subunit protein uS12 from Colwellia psychrerythraea (strain 34H / ATCC BAA-681) (Vibrio psychroerythus).